The chain runs to 489 residues: 3-octaprenyl-4-hydroxybenzoate carboxy-lyase (489 aa).

Asparagine 172 is a binding site for Mn(2+). Prenylated FMN contacts are provided by residues 175–177, 189–191, and 194–195; these read VYR, RWL, and RG. Glutamate 240 contributes to the Mn(2+) binding site. Aspartate 288 functions as the Proton donor in the catalytic mechanism.

Belongs to the UbiD family. In terms of assembly, homohexamer. The cofactor is prenylated FMN. Requires Mn(2+) as cofactor.

The protein resides in the cell membrane. It catalyses the reaction a 4-hydroxy-3-(all-trans-polyprenyl)benzoate + H(+) = a 2-(all-trans-polyprenyl)phenol + CO2. The protein operates within cofactor biosynthesis; ubiquinone biosynthesis. Functionally, catalyzes the decarboxylation of 3-octaprenyl-4-hydroxy benzoate to 2-octaprenylphenol, an intermediate step in ubiquinone biosynthesis. The protein is 3-octaprenyl-4-hydroxybenzoate carboxy-lyase of Wigglesworthia glossinidia brevipalpis.